Here is a 496-residue protein sequence, read N- to C-terminus: MLO-like protein 15 (496 aa).

The Extracellular portion of the chain corresponds to 1 to 9 (MAGGGTTLE). Residues 10 to 30 (YTPTWVVALVCSVIVSISFAV) form a helical membrane-spanning segment. At 31–59 (ERLIHRAGKHFKNNDQKQLFGALQKIKEE) the chain is on the cytoplasmic side. A helical membrane pass occupies residues 60 to 80 (LMLVGFISLLLSVGQSKIAKI). Over 81 to 147 (CISKELSEKF…MSLSALHELH (67 aa)) the chain is Extracellular. A helical transmembrane segment spans residues 148–168 (IFIFVLAVAHIIFCLLTIVFG). Over 169 to 269 (TMKIKQWKKW…KYLMRALNSD (101 aa)) the chain is Cytoplasmic. Residues 270–290 (FKKVVGISWYLWVFVVLFLLL) traverse the membrane as a helical segment. Position 291 (Asn291) is a topological domain, extracellular. Residues 292-312 (IVAWHVYFWLAFIPLILLLAV) form a helical membrane-spanning segment. Residues 313–355 (GTKLEHIITDLAHEVAEKHIAVEGDLVVRPSDDLFWFQSPRLV) lie on the Cytoplasmic side of the membrane. Residues 356–376 (LFLIHFILFQNSFEIAYFFFI) form a helical membrane-spanning segment. Over 377-397 (LFQFGWDSCIMDHVKFVIPRL) the chain is Extracellular. A helical transmembrane segment spans residues 398-418 (VIGVIIQLLCSYSTLPLYALV). The Cytoplasmic portion of the chain corresponds to 419–496 (TQMGSSFKGA…KEKSEIAHHD (78 aa)). The calmodulin-binding stretch occupies residues 432 to 453 (EQTQEHLVGWAKMAKRGVKKGA). The interval 454 to 496 (TQVGTSHDATSPRPSIQLNSLLGKGSSQQNQNPKEKSEIAHHD) is disordered. The segment covering 455 to 485 (QVGTSHDATSPRPSIQLNSLLGKGSSQQNQN) has biased composition (polar residues). Positions 486-496 (PKEKSEIAHHD) are enriched in basic and acidic residues.

The protein belongs to the MLO family.

The protein resides in the membrane. Its function is as follows. May be involved in modulation of pathogen defense and leaf cell death. Activity seems to be regulated by Ca(2+)-dependent calmodulin binding and seems not to require heterotrimeric G proteins. The sequence is that of MLO-like protein 15 (MLO15) from Arabidopsis thaliana (Mouse-ear cress).